The following is a 115-amino-acid chain: Pycsar effector protein TpPycTM (115 aa).

A run of 2 helical transmembrane segments spans residues 44 to 64 (IGNLLLIDTITVGIFITYATN) and 74 to 94 (VWNILLFITGLIFTVSSVILV).

The protein resides in the cell inner membrane. Its function is as follows. Pycsar (pyrimidine cyclase system for antiphage resistance) provides immunity against bacteriophage. The pyrimidine cyclase (PycC) synthesizes cyclic nucleotides in response to infection; these serve as specific second messenger signals. The signals activate the adjacent effector, leading to bacterial cell death and abortive phage infection. A clade C Pycsar system. In terms of biological role, the effector gene of a two-gene Pycsar system. Expression of this and adjacent uridylate cyclase TpPycC (AC A0A1T4LJ54) probably confers resistance to bacteriophage. The genes are probably only expressed in response to bacteriophage infection. Probably only responds to cUMP (produced by its cognate NTP cyclase), acts by impairing membrane integrity. The protein is Pycsar effector protein TpPycTM of Treponema porcinum.